Reading from the N-terminus, the 117-residue chain is uncharacterized protein (117 aa).

The first 38 residues, 1–38 (MIIDSSRIPSFTQLHSTMTRAPLLLLCVALVLLGHVNG), serve as a signal peptide directing secretion.

It is found in the secreted. This is an uncharacterized protein from Homo sapiens (Human).